We begin with the raw amino-acid sequence, 217 residues long: Thiamine-phosphate synthase (217 aa).

4-amino-2-methyl-5-(diphosphooxymethyl)pyrimidine contacts are provided by residues 39-43 (QYRDK) and N71. The Mg(2+) site is built by D72 and D91. A 4-amino-2-methyl-5-(diphosphooxymethyl)pyrimidine-binding site is contributed by T110. 137–139 (SNT) is a 2-[(2R,5Z)-2-carboxy-4-methylthiazol-5(2H)-ylidene]ethyl phosphate binding site. A 4-amino-2-methyl-5-(diphosphooxymethyl)pyrimidine-binding site is contributed by K140. 2-[(2R,5Z)-2-carboxy-4-methylthiazol-5(2H)-ylidene]ethyl phosphate is bound at residue G167.

The protein belongs to the thiamine-phosphate synthase family. Mg(2+) is required as a cofactor.

The catalysed reaction is 2-[(2R,5Z)-2-carboxy-4-methylthiazol-5(2H)-ylidene]ethyl phosphate + 4-amino-2-methyl-5-(diphosphooxymethyl)pyrimidine + 2 H(+) = thiamine phosphate + CO2 + diphosphate. The enzyme catalyses 2-(2-carboxy-4-methylthiazol-5-yl)ethyl phosphate + 4-amino-2-methyl-5-(diphosphooxymethyl)pyrimidine + 2 H(+) = thiamine phosphate + CO2 + diphosphate. It catalyses the reaction 4-methyl-5-(2-phosphooxyethyl)-thiazole + 4-amino-2-methyl-5-(diphosphooxymethyl)pyrimidine + H(+) = thiamine phosphate + diphosphate. The protein operates within cofactor biosynthesis; thiamine diphosphate biosynthesis; thiamine phosphate from 4-amino-2-methyl-5-diphosphomethylpyrimidine and 4-methyl-5-(2-phosphoethyl)-thiazole: step 1/1. In terms of biological role, condenses 4-methyl-5-(beta-hydroxyethyl)thiazole monophosphate (THZ-P) and 2-methyl-4-amino-5-hydroxymethyl pyrimidine pyrophosphate (HMP-PP) to form thiamine monophosphate (TMP). The sequence is that of Thiamine-phosphate synthase from Saccharophagus degradans (strain 2-40 / ATCC 43961 / DSM 17024).